The chain runs to 406 residues: MVMYEKTAEHFGQKFKDLPEGHLLVNLGPSHPATHGILQNVIQIDGERVVDTESVIGYVHRCFEKLGERYDYNQFLVCTDRMNYVSTPLNNIGWILTVEKMMQIQVPDRVTYVRMIISELSRIMDHIICNGIMGVDLGAFSGLLHLFHHRENIYQILEKLTGARLTTTFCRVGGMERDIYPEFQTEIKLILKGLKPALDEFEELLIRNKIFNERTKGIGGISADRAIAYGFSGPNLRAAGVPWDVRKDDPYMFYDKVNFDIPVGEDGSALDRTLVRMEEMRQSMKIIEQLIDGIPEGPYHADVPHSFLPPKDRVYHNMEELIYHFKIIMHGVKVPPGEYYHATEAANGELGFYVVSEGDKSPWRVHVRRPCFWYYQAFPEMVKGGLLADTIATMSSLNVIAGELDC.

The protein belongs to the complex I 49 kDa subunit family. In terms of assembly, NDH-1 is composed of 14 different subunits. Subunits NuoB, C, D, E, F, and G constitute the peripheral sector of the complex.

The protein localises to the cell inner membrane. It carries out the reaction a quinone + NADH + 5 H(+)(in) = a quinol + NAD(+) + 4 H(+)(out). NDH-1 shuttles electrons from NADH, via FMN and iron-sulfur (Fe-S) centers, to quinones in the respiratory chain. The immediate electron acceptor for the enzyme in this species is believed to be ubiquinone. Couples the redox reaction to proton translocation (for every two electrons transferred, four hydrogen ions are translocated across the cytoplasmic membrane), and thus conserves the redox energy in a proton gradient. In Leptospira biflexa serovar Patoc (strain Patoc 1 / Ames), this protein is NADH-quinone oxidoreductase subunit D.